Consider the following 329-residue polypeptide: Eukaryotic translation initiation factor 3 subunit I (329 aa).

5 WD repeats span residues 8-47, 50-89, 145-184, 187-226, and 284-323; these read GHQR…RLGT, GHGG…NIAT, ITDS…KIHS, EHTH…LLKE, and GHFG…FDYT.

It belongs to the eIF-3 subunit I family. Component of the eukaryotic translation initiation factor 3 (eIF-3) complex.

Its subcellular location is the cytoplasm. Its function is as follows. Component of the eukaryotic translation initiation factor 3 (eIF-3) complex, which is involved in protein synthesis of a specialized repertoire of mRNAs and, together with other initiation factors, stimulates binding of mRNA and methionyl-tRNAi to the 40S ribosome. The eIF-3 complex specifically targets and initiates translation of a subset of mRNAs involved in cell proliferation. The polypeptide is Eukaryotic translation initiation factor 3 subunit I (Bombyx mori (Silk moth)).